A 174-amino-acid polypeptide reads, in one-letter code: Probable calcium-binding protein CML20 (174 aa).

A lipid anchor (N-myristoyl glycine) is attached at Gly2. The interval 14–35 (LRRSRSRSPPPAVLDPSQSPLS) is disordered. EF-hand domains are found at residues 39–74 (EAEPELIRVFRCFDTDGDGLISAAEMREFYGCSVDE), 75–100 (AEEMVAAADRDGDGFVSIEELRAVME), 102–137 (GGLDALRAAFDEYDEDGNGVITAEELRRALRRLNLD), and 141–174 (LTAEQCAEIVAAVDSDGDGVISFDEFKAMMSKQA). The Ca(2+) site is built by Asp52, Asp54, Asp56, Glu63, Asp83, Asp85, Asp87, Glu94, Asp115, Asp117, Asn119, Glu126, Asp154, Asp156, Asp158, and Glu165.

In terms of biological role, potential calcium sensor. The chain is Probable calcium-binding protein CML20 (CML20) from Oryza sativa subsp. japonica (Rice).